We begin with the raw amino-acid sequence, 530 residues long: NAD(+) kinase (530 aa).

3 disordered regions span residues 1 to 27 (MKEN…HNNN), 57 to 99 (ISSE…KSSN), and 486 to 530 (SLEA…RFSV). A compositionally biased stretch (basic and acidic residues) spans 13–25 (WVNEEDGRNDHHN). Residues 59–75 (SESSSRRSSLLNKDSSL) are compositionally biased toward low complexity. Residues 88-99 (INGTRGSSKSSN) are compositionally biased toward polar residues. S499 and S503 each carry phosphoserine. Over residues 499–508 (SDDESDDESV) the composition is skewed to acidic residues.

The protein belongs to the NAD kinase family. In terms of assembly, homohexamer.

The catalysed reaction is NAD(+) + ATP = ADP + NADP(+) + H(+). In terms of biological role, specifically phosphorylates NAD in the presence of ATP, dATP, or CTP as phosphoryl donors. This chain is NAD(+) kinase (UTR1), found in Saccharomyces cerevisiae (strain ATCC 204508 / S288c) (Baker's yeast).